Consider the following 75-residue polypeptide: DNA-directed RNA polymerase subunit omega (75 aa).

The protein belongs to the RNA polymerase subunit omega family. In cyanobacteria the RNAP catalytic core is composed of 2 alpha, 1 beta, 1 beta', 1 gamma and 1 omega subunit. When a sigma factor is associated with the core the holoenzyme is formed, which can initiate transcription.

The catalysed reaction is RNA(n) + a ribonucleoside 5'-triphosphate = RNA(n+1) + diphosphate. Its function is as follows. Promotes RNA polymerase assembly. Latches the N- and C-terminal regions of the beta' subunit thereby facilitating its interaction with the beta and alpha subunits. This is DNA-directed RNA polymerase subunit omega from Picosynechococcus sp. (strain ATCC 27264 / PCC 7002 / PR-6) (Agmenellum quadruplicatum).